Reading from the N-terminus, the 251-residue chain is Small ribosomal subunit protein uS3 (251 aa).

Residues 39-109 form the KH type-2 domain; that stretch reads IRNYVQARLK…EVKIDVIEVI (71 aa). Basic and acidic residues predominate over residues 222–239; the sequence is LKKIKDRRGEQRSRGRDS. The segment at 222–251 is disordered; the sequence is LKKIKDRRGEQRSRGRDSRNRRRRKPRQTT. The segment covering 240 to 251 has biased composition (basic residues); it reads RNRRRRKPRQTT.

The protein belongs to the universal ribosomal protein uS3 family. Part of the 30S ribosomal subunit. Forms a tight complex with proteins S10 and S14.

In terms of biological role, binds the lower part of the 30S subunit head. Binds mRNA in the 70S ribosome, positioning it for translation. This Prosthecochloris aestuarii (strain DSM 271 / SK 413) protein is Small ribosomal subunit protein uS3.